The chain runs to 507 residues: Myocyte-specific enhancer factor 2D (507 aa).

The MADS-box domain occupies 3–57 (RKKIQIQRITDERNRQVTFTKRKFGLMKKAYELSVLCDCEIALIIFNHSNKLFQY). A DNA-binding region (mef2-type) is located at residues 58–86 (ASTDMDKVLLKYTEYNEPHESRTNADIIE). Residues Ser98, Ser106, Ser110, Ser121, and Ser180 each carry the phosphoserine modification. Positions 174 to 207 (TDPRLLSPQQPALQRNSVSPGLPQRPASAGAMLG) are disordered. A compositionally biased stretch (polar residues) spans 180–192 (SPQQPALQRNSVS). Ser190 bears the Phosphoserine; by PKA mark. The residue at position 231 (Ser231) is a Phosphoserine. 3 disordered regions span residues 244–267 (NKVIPAKSPPPPTHNTQLGAPSRK), 357–392 (WQQPQQPQQPQPPQPPQSQPQPPQPQPQQPPQQQPH), and 423–507 (SIKS…WTLK). Lys245 is subject to N6-acetyllysine. Position 251 is a phosphoserine (Ser251). The span at 363 to 389 (PQQPQPPQPPQSQPQPPQPQPQQPPQQ) shows a compositional bias: pro residues. The residue at position 425 (Lys425) is an N6-acetyllysine; alternate. Lys425 participates in a covalent cross-link: Glycyl lysine isopeptide (Lys-Gly) (interchain with G-Cter in SUMO); alternate. Ser430 is subject to Phosphoserine.

As to quaternary structure, forms a complex with class II HDACs in undifferentiating cells. On myogenic differentiation, HDACs are released into the cytoplasm allowing MEF2s to interact with other proteins for activation. Interacts with HDAC4 (in undifferentiating cells); the interaction translocates MEF2D to nuclear dots. Forms a heterodimer with MEF2A. Interacts with MAPK7; the interaction phosphorylates but does not activate MEF2D. Interacts with MYOG. Interacts with CCAR2 and HDAC3. In terms of processing, phosphorylated on Ser-430 by CDK5 is required for Lys-425 sumoylation and inhibits transcriptional activity. In neurons, enhanced CDK5 activity induced by neurotoxins promotes caspase 3-mediated cleavage leading to neuron apoptosis. Phosphorylation on Ser-180 can be enhanced by EGF. Phosphorylated and activated by CaMK4. Acetylated on Lys-425 by CREBBP. Acetylated by EP300. Deacetylated by SIRT1 and HDAC3. Post-translationally, sumoylated on Lys-425 with SUMO2 but not SUMO1; which inhibits transcriptional activity and myogenic activity. Desumoylated by SENP3.

The protein localises to the nucleus. In terms of biological role, transcriptional activator which binds specifically to the MEF2 element, 5'-YTA[AT](4)TAR-3', found in numerous muscle-specific, growth factor- and stress-induced genes. Mediates cellular functions not only in skeletal and cardiac muscle development, but also in neuronal differentiation and survival. Plays diverse roles in the control of cell growth, survival and apoptosis via p38 MAPK signaling in muscle-specific and/or growth factor-related transcription. Plays a critical role in the regulation of neuronal apoptosis. This is Myocyte-specific enhancer factor 2D (Mef2d) from Rattus norvegicus (Rat).